A 703-amino-acid polypeptide reads, in one-letter code: Calpain-8 (703 aa).

The Calpain catalytic domain occupies 45–344 (LFKDPEFPAC…YSRLEICNLS (300 aa)). Catalysis depends on residues C105, H262, and N286. Positions 355-512 (KWNLVLFNGR…VFSEKKAKAL (158 aa)) are domain III. A linker region spans residues 513–531 (EIGDTVSGHPHEPHPRDMD). 4 EF-hand domains span residues 532 to 566 (EEDEHVRSLFEEFVGKDSEISANQLKRVLNEVLSK), 575 to 608 (FNINTCREMISLLDSDGTGSLGPMEFKTLWLKIR), 605 to 640 (LKIRTYLEIFQEMDHNHVGTIEAHEMRTALKKAGFT), and 670 to 703 (IRLETLFKLFRLLDKDQNGIVQLSLAEWLCCVLV). The domain IV stretch occupies residues 532–703 (EEDEHVRSLF…LAEWLCCVLV (172 aa)). D588, D590, T592, S594, E599, D618, N620, T624, and E629 together coordinate Ca(2+).

Belongs to the peptidase C2 family. Monomer and homooligomer. Interacts with COPS1/GPS1, COPB1, EYA2, NME2, NME4 and TOMM70. Ca(2+) serves as cofactor. In terms of processing, undergoes autolytic cleavage between Ala-5 and Ala-6 which gives rise to fragments extending from Ala-6 to the C-terminus, Ala-6 to the EF-hand 2 domain and from Ala-6 to the beginning of domain III. In terms of tissue distribution, predominantly expressed in the stomach. Localizes strictly to the surface mucus cells in the gastric epithelium and the mucus-secreting goblet cells in the duodenum. Detected in the pituitary after estrogen stimulation.

It is found in the cytoplasm. It localises to the golgi apparatus. The enzyme catalyses Broad endopeptidase specificity.. Functionally, calcium-regulated non-lysosomal thiol-protease. Involved in membrane trafficking in the gastric surface mucus cells (pit cells) and may involve the membrane trafficking of mucus cells via interactions with coat protein. Proteolytically cleaves the beta-subunit of coatomer complex. In Rattus norvegicus (Rat), this protein is Calpain-8 (Capn8).